Here is a 444-residue protein sequence, read N- to C-terminus: Na(+)-translocating NADH-quinone reductase subunit A (444 aa).

This sequence belongs to the NqrA family. As to quaternary structure, composed of six subunits; NqrA, NqrB, NqrC, NqrD, NqrE and NqrF.

The catalysed reaction is a ubiquinone + n Na(+)(in) + NADH + H(+) = a ubiquinol + n Na(+)(out) + NAD(+). In terms of biological role, NQR complex catalyzes the reduction of ubiquinone-1 to ubiquinol by two successive reactions, coupled with the transport of Na(+) ions from the cytoplasm to the periplasm. NqrA to NqrE are probably involved in the second step, the conversion of ubisemiquinone to ubiquinol. This Shewanella denitrificans (strain OS217 / ATCC BAA-1090 / DSM 15013) protein is Na(+)-translocating NADH-quinone reductase subunit A.